A 462-amino-acid polypeptide reads, in one-letter code: S-alkyl-thiohydroximate lyase SUR1 (462 aa).

This sequence belongs to the class-I pyridoxal-phosphate-dependent aminotransferase family. It depends on pyridoxal 5'-phosphate as a cofactor.

Functionally, C-S lyase involved in glucosinolate biosynthesis. Converts S-(alkylacetohydroximoyl)-L-cysteine to thiohydroximate. Functions in auxin homeostasis. Probably required for glucosinolate activation in response to pathogens. This Arabidopsis thaliana (Mouse-ear cress) protein is S-alkyl-thiohydroximate lyase SUR1 (SUR1).